The following is a 474-amino-acid chain: Cbb3-type cytochrome c oxidase subunit CcoN1 (474 aa).

Residues 1-16 (MNTATSTAYSYKVVRQ) are Cytoplasmic-facing. A helical transmembrane segment spans residues 17 to 37 (FAIMTVVWGIVGMGLGVFIAA). Residues 38 to 60 (QLAWPFLNFDLPWTSFGRLRPLH) are Periplasmic-facing. H60 is a binding site for heme b. The helical transmembrane segment at 61–81 (TNAVIFAFGGCALFATSYYSV) threads the bilayer. At 82 to 96 (QRTCQTTLFAPKLAA) the chain is on the cytoplasmic side. A helical transmembrane segment spans residues 97–117 (FTFWGWQLVILLAAISLPLGF). Residues 118–129 (TSSKEYAELEWP) are Periplasmic-facing. A helical membrane pass occupies residues 130 to 150 (IDILITIVWVAYAVVFFGTLA). At 151–156 (KRKVKH) the chain is on the cytoplasmic side. The helical transmembrane segment at 157 to 177 (IYVGNWFFGAFILTVAILHVV) threads the bilayer. At 178 to 205 (NNLEIPVTAMKSYSLYAGATDAMVQWWY) the chain is on the periplasmic side. The helical transmembrane segment at 206 to 226 (GHNAVGFFLTAGFLGIMYYFV) threads the bilayer. H207 contacts Cu cation. Residues 227–238 (PKQAERPVYSYR) are Cytoplasmic-facing. The chain crosses the membrane as a helical span at residues 239–259 (LSIVHFWALITVYIWAGPHHL). Positions 257 and 258 each coordinate Cu cation. Residues 260–270 (HYTALPDWAQS) are Periplasmic-facing. Residues 271–291 (LGMVMSLILLAPSWGGMINGM) traverse the membrane as a helical segment. Over 292 to 308 (MTLSGAWHKLRSDPILR) the chain is Cytoplasmic. Residues 309–329 (FLVVSLAFYGMSTFEGPMMAI) form a helical membrane-spanning segment. The Periplasmic segment spans residues 330–345 (KTVNALSHYTDWTIGH). Heme b-binding residues include H345 and H347. Residues 346-366 (VHAGALGWVAMVSIGALYHLV) form a helical membrane-spanning segment. The Cytoplasmic portion of the chain corresponds to 367–384 (PKVFGREQMHSIGLINTH). A helical membrane pass occupies residues 385–405 (FWLATIGTVLYIASMWVNGIA). Over 406-432 (QGLMWRAINDDGTLTYSFVESLEASHP) the chain is Periplasmic. The chain crosses the membrane as a helical span at residues 433 to 453 (GFVVRMIGGAIFFAGMLVMAY). Over 454–474 (NTWRTVQAAKPAEYDAAAQIA) the chain is Cytoplasmic.

Belongs to the heme-copper respiratory oxidase family. In terms of assembly, component of the cbb3-type cytochrome c oxidase at least composed of CcoN, CcoO, CcoQ and CcoP. It depends on Cu(2+) as a cofactor. Heme b is required as a cofactor.

The protein resides in the cell inner membrane. It catalyses the reaction 4 Fe(II)-[cytochrome c] + O2 + 8 H(+)(in) = 4 Fe(III)-[cytochrome c] + 2 H2O + 4 H(+)(out). It participates in energy metabolism; oxidative phosphorylation. Its function is as follows. Cbb3-type cytochrome c oxidase is the component of the respiratory chain that catalyzes the reduction of oxygen to water. Subunits CcoN and CcoO form the functional core of the enzyme complex. Subunits CcoP and CcoQ may optionally bind to the core. CcoN is the catalytic subunit of the enzyme. Electrons originating in cytochrome c or a quinol are transferred to the bimetallic center formed by a high-spin heme and copper B. The complex also functions as a proton pump. This is Cbb3-type cytochrome c oxidase subunit CcoN1 from Stutzerimonas stutzeri (Pseudomonas stutzeri).